The sequence spans 287 residues: MLQMAISNLDGVSSAKVEINCVIAPHKAQAQIPGLANVKNIVAVASGKGGVGKSTTAANLALALAREGARVGILDADIYGPSQGVMFGIAEGTRPKIRDQKWFVPIEAHGVEVMSMAFLTDDNTPMVWRGPMVSGALLQLVTQTAWNDLDYLVIDMPPGTGDIQLTLAQKVPVAGSVIVTTPQDLALLDARKGVEMFRKVNIPVLGVVENMAVHICSNCGHAEHLFGEGGGEKLATQYGVEVLASLPLAMEIREQADNGKPTAIADPNSPIALIYQELAVTSGRGLF.

47 to 54 (GKGGVGKS) contributes to the ATP binding site.

This sequence belongs to the Mrp/NBP35 ATP-binding proteins family. Homodimer.

Its function is as follows. Binds and transfers iron-sulfur (Fe-S) clusters to target apoproteins. Can hydrolyze ATP. The sequence is that of Iron-sulfur cluster carrier protein from Pseudomonas fragi.